The sequence spans 63 residues: Conotoxin TxMRCL-D012 (63 aa).

The N-terminal stretch at Met1–Ser19 is a signal peptide. Residues Asp20–Ser47 constitute a propeptide that is removed on maturation. Pyrrolidone carboxylic acid is present on Gln50.

This sequence belongs to the conotoxin T superfamily. In terms of processing, contains 2 disulfide bonds that can be either 'C1-C3, C2-C4' or 'C1-C4, C2-C3', since these disulfide connectivities have been observed for conotoxins with cysteine framework V (for examples, see AC P0DQQ7 and AC P81755). As to expression, expressed by the venom duct.

It localises to the secreted. This is Conotoxin TxMRCL-D012 from Conus textile (Cloth-of-gold cone).